Here is a 538-residue protein sequence, read N- to C-terminus: Chaperonin GroEL 1 (538 aa).

Residues 29–32, 86–90, glycine 413, and aspartate 494 contribute to the ATP site; these read TLGP and DGTTT.

This sequence belongs to the chaperonin (HSP60) family. Forms a cylinder of 14 subunits composed of two heptameric rings stacked back-to-back. Interacts with the co-chaperonin GroES.

It is found in the cytoplasm. It carries out the reaction ATP + H2O + a folded polypeptide = ADP + phosphate + an unfolded polypeptide.. Its function is as follows. Together with its co-chaperonin GroES, plays an essential role in assisting protein folding. The GroEL-GroES system forms a nano-cage that allows encapsulation of the non-native substrate proteins and provides a physical environment optimized to promote and accelerate protein folding. This is Chaperonin GroEL 1 from Mycolicibacterium paratuberculosis (strain ATCC BAA-968 / K-10) (Mycobacterium paratuberculosis).